Here is a 239-residue protein sequence, read N- to C-terminus: Urease accessory protein UreE (239 aa).

Residues 185–239 (VASPLDEPHGSGLHIHGIHSHGDGHSHSHDSHSHSHDSDHGHSHSHGDHDHDHKH) are disordered. Over residues 204–239 (SHGDGHSHSHDSHSHSHDSDHGHSHSHGDHDHDHKH) the composition is skewed to basic and acidic residues.

Belongs to the UreE family.

The protein resides in the cytoplasm. Its function is as follows. Involved in urease metallocenter assembly. Binds nickel. Probably functions as a nickel donor during metallocenter assembly. This is Urease accessory protein UreE from Yersinia frederiksenii.